Here is a 353-residue protein sequence, read N- to C-terminus: Photosystem II protein D1 (353 aa).

Residue T2 is modified to N-acetylthreonine. T2 is subject to Phosphothreonine. 3 helical membrane-spanning segments follow: residues 29–46, 118–133, and 142–156; these read YIGW…TATS, HFLL…EWEL, and WIAV…AATA. H118 contributes to the chlorophyll a binding site. Y126 serves as a coordination point for pheophytin a. D170 and E189 together coordinate [CaMn4O5] cluster. Residues 197–218 traverse the membrane as a helical segment; sequence FHMLGVAGVFGGSLFSAMHGSL. H198 contacts chlorophyll a. A quinone-binding positions include H215 and 264-265; that span reads SF. Residue H215 participates in Fe cation binding. H272 is a binding site for Fe cation. A helical transmembrane segment spans residues 274 to 288; that stretch reads FLAAWPVVGIWFTAL. Positions 332, 333, 342, and 344 each coordinate [CaMn4O5] cluster. The propeptide occupies 345–353; it reads AVEAPSTIG.

The protein belongs to the reaction center PufL/M/PsbA/D family. In terms of assembly, PSII is composed of 1 copy each of membrane proteins PsbA, PsbB, PsbC, PsbD, PsbE, PsbF, PsbH, PsbI, PsbJ, PsbK, PsbL, PsbM, PsbT, PsbX, PsbY, PsbZ, Psb30/Ycf12, at least 3 peripheral proteins of the oxygen-evolving complex and a large number of cofactors. It forms dimeric complexes. The cofactor is The D1/D2 heterodimer binds P680, chlorophylls that are the primary electron donor of PSII, and subsequent electron acceptors. It shares a non-heme iron and each subunit binds pheophytin, quinone, additional chlorophylls, carotenoids and lipids. D1 provides most of the ligands for the Mn4-Ca-O5 cluster of the oxygen-evolving complex (OEC). There is also a Cl(-1) ion associated with D1 and D2, which is required for oxygen evolution. The PSII complex binds additional chlorophylls, carotenoids and specific lipids.. In terms of processing, tyr-161 forms a radical intermediate that is referred to as redox-active TyrZ, YZ or Y-Z. C-terminally processed by CTPA; processing is essential to allow assembly of the oxygen-evolving complex and thus photosynthetic growth.

It localises to the plastid. Its subcellular location is the chloroplast thylakoid membrane. The catalysed reaction is 2 a plastoquinone + 4 hnu + 2 H2O = 2 a plastoquinol + O2. Its function is as follows. Photosystem II (PSII) is a light-driven water:plastoquinone oxidoreductase that uses light energy to abstract electrons from H(2)O, generating O(2) and a proton gradient subsequently used for ATP formation. It consists of a core antenna complex that captures photons, and an electron transfer chain that converts photonic excitation into a charge separation. The D1/D2 (PsbA/PsbD) reaction center heterodimer binds P680, the primary electron donor of PSII as well as several subsequent electron acceptors. This is Photosystem II protein D1 from Lemna minor (Common duckweed).